Consider the following 66-residue polypeptide: ATP synthase F(0) complex subunit 8 (66 aa).

The chain crosses the membrane as a helical span at residues 8–24; sequence IWLLAVVIVLTTLMIFL. At lysine 54 the chain carries N6-acetyllysine; alternate. Lysine 54 carries the N6-succinyllysine; alternate modification. Lysine 57 carries the post-translational modification N6-acetyllysine.

This sequence belongs to the ATPase protein 8 family. As to quaternary structure, component of the ATP synthase complex composed at least of ATP5F1A/subunit alpha, ATP5F1B/subunit beta, ATP5MC1/subunit c (homooctomer), MT-ATP6/subunit a, MT-ATP8/subunit 8, ATP5ME/subunit e, ATP5MF/subunit f, ATP5MG/subunit g, ATP5MK/subunit k, ATP5MJ/subunit j, ATP5F1C/subunit gamma, ATP5F1D/subunit delta, ATP5F1E/subunit epsilon, ATP5PF/subunit F6, ATP5PB/subunit b, ATP5PD/subunit d, ATP5PO/subunit OSCP. ATP synthase complex consists of a soluble F(1) head domain (subunits alpha(3) and beta(3)) - the catalytic core - and a membrane F(0) domain - the membrane proton channel (subunits c, a, 8, e, f, g, k and j). These two domains are linked by a central stalk (subunits gamma, delta, and epsilon) rotating inside the F1 region and a stationary peripheral stalk (subunits F6, b, d, and OSCP). Interacts with PRICKLE3.

The protein resides in the mitochondrion membrane. Functionally, subunit 8, of the mitochondrial membrane ATP synthase complex (F(1)F(0) ATP synthase or Complex V) that produces ATP from ADP in the presence of a proton gradient across the membrane which is generated by electron transport complexes of the respiratory chain. ATP synthase complex consist of a soluble F(1) head domain - the catalytic core - and a membrane F(1) domain - the membrane proton channel. These two domains are linked by a central stalk rotating inside the F(1) region and a stationary peripheral stalk. During catalysis, ATP synthesis in the catalytic domain of F(1) is coupled via a rotary mechanism of the central stalk subunits to proton translocation. In vivo, can only synthesize ATP although its ATP hydrolase activity can be activated artificially in vitro. Part of the complex F(0) domain. This is ATP synthase F(0) complex subunit 8 from Loxodonta africana (African elephant).